The following is a 379-amino-acid chain: Mating-type protein MAT-1 (379 aa).

Positions 60-117 (KARKALNAFVGFRCYYITIPMFKPWPMKKLSNLIGLLWEADPNKSLWSLMAKAWSTIR) form a DNA-binding region, alpha box.

The protein belongs to the MATALPHA1 family.

It localises to the nucleus. Its function is as follows. Mating type proteins are sequence specific DNA-binding proteins that act as master switches in fungal differentiation by controlling gene expression in a cell type-specific fashion. Transcriptional activator that induces the transcription of alpha-specific genes. This chain is Mating-type protein MAT-1 (MAT1), found in Cochliobolus carbonum (strain 26-R-13) (Maize leaf spot fungus).